Consider the following 404-residue polypeptide: Probable tRNA sulfurtransferase (404 aa).

The THUMP domain maps to 61 to 166 (EAVSERLKDV…SGYSYIMCDE (106 aa)). ATP contacts are provided by residues 184 to 185 (LL), 209 to 210 (HF), arginine 266, glycine 288, and glutamine 297.

The protein belongs to the ThiI family.

It is found in the cytoplasm. It carries out the reaction [ThiI sulfur-carrier protein]-S-sulfanyl-L-cysteine + a uridine in tRNA + 2 reduced [2Fe-2S]-[ferredoxin] + ATP + H(+) = [ThiI sulfur-carrier protein]-L-cysteine + a 4-thiouridine in tRNA + 2 oxidized [2Fe-2S]-[ferredoxin] + AMP + diphosphate. The enzyme catalyses [ThiS sulfur-carrier protein]-C-terminal Gly-Gly-AMP + S-sulfanyl-L-cysteinyl-[cysteine desulfurase] + AH2 = [ThiS sulfur-carrier protein]-C-terminal-Gly-aminoethanethioate + L-cysteinyl-[cysteine desulfurase] + A + AMP + 2 H(+). It participates in cofactor biosynthesis; thiamine diphosphate biosynthesis. In terms of biological role, catalyzes the ATP-dependent transfer of a sulfur to tRNA to produce 4-thiouridine in position 8 of tRNAs, which functions as a near-UV photosensor. Also catalyzes the transfer of sulfur to the sulfur carrier protein ThiS, forming ThiS-thiocarboxylate. This is a step in the synthesis of thiazole, in the thiamine biosynthesis pathway. The sulfur is donated as persulfide by IscS. In Bacillus cereus (strain AH187), this protein is Probable tRNA sulfurtransferase.